A 170-amino-acid chain; its full sequence is Cytochrome b6-f complex subunit 4 (170 aa).

The next 3 membrane-spanning stretches (helical) occupy residues Leu46–Val66, Leu105–Glu125, and Thr141–Leu161.

Belongs to the cytochrome b family. PetD subfamily. In terms of assembly, the 4 large subunits of the cytochrome b6-f complex are cytochrome b6, subunit IV (17 kDa polypeptide, PetD), cytochrome f and the Rieske protein, while the 4 small subunits are PetG, PetL, PetM and PetN. The complex functions as a dimer.

The protein localises to the cellular thylakoid membrane. In terms of biological role, component of the cytochrome b6-f complex, which mediates electron transfer between photosystem II (PSII) and photosystem I (PSI), cyclic electron flow around PSI, and state transitions. This Synechococcus sp. (strain JA-2-3B'a(2-13)) (Cyanobacteria bacterium Yellowstone B-Prime) protein is Cytochrome b6-f complex subunit 4.